The following is a 287-amino-acid chain: Protein REVEILLE 3 (287 aa).

One can recognise an HTH myb-type domain in the interval 56 to 110; the sequence is TITKSRENWTEQEHDKFLEALHLFDRDWKKIKAFVGSKTVIQIRSHAQKYFLKVQ. The H-T-H motif DNA-binding region spans 83–106; that stretch reads WKKIKAFVGSKTVIQIRSHAQKYF. Residues 111-135 form a disordered region; sequence KNGTKEHLPPPRPKRKANHPYPQKA.

The protein resides in the nucleus. Its function is as follows. Probable transcription factor. In Arabidopsis thaliana (Mouse-ear cress), this protein is Protein REVEILLE 3 (RVE3).